A 965-amino-acid chain; its full sequence is Aminopeptidase N (965 aa).

Residues 2–8 (AKGFYIS) lie on the Cytoplasmic side of the membrane. Residues 9–32 (KTLGILGILLGVAAVCTIIALSVV) traverse the membrane as a helical; Signal-anchor for type II membrane protein segment. The tract at residues 33–68 (YAQEKNRNAENSAIAPTLPGSTSATTSTTNPAIDES) is cytosolic Ser/Thr-rich junction. The Extracellular portion of the chain corresponds to 33–965 (YAQEKNRNAE…VVLKWFTENS (933 aa)). Residues 44–68 (SAIAPTLPGSTSATTSTTNPAIDES) form a disordered region. The span at 47-64 (APTLPGSTSATTSTTNPA) shows a compositional bias: low complexity. Residues 69 to 965 (KPWNQYRLPK…VVLKWFTENS (897 aa)) form a metalloprotease region. N114 and N128 each carry an N-linked (GlcNAc...) asparagine glycan. Position 176 is a sulfotyrosine (Y176). Residues N234, N242, and N264 are each glycosylated (N-linked (GlcNAc...) asparagine). Substrate is bound at residue 351–355 (GAMEN). H387 serves as a coordination point for Zn(2+). Catalysis depends on E388, which acts as the Proton acceptor. The Zn(2+) site is built by H391 and E410. Residues N555, N606, and N624 are each glycosylated (N-linked (GlcNAc...) asparagine). Residues C760 and C767 are joined by a disulfide bond. An N-linked (GlcNAc...) asparagine glycan is attached at N780. C797 and C833 are oxidised to a cystine. The residue at position 852 (Y852) is a Phosphotyrosine.

It belongs to the peptidase M1 family. Homodimer. Interacts with SLC6A19. Requires Zn(2+) as cofactor. Post-translationally, sulfated. In terms of processing, N- and O-glycosylated. May undergo proteolysis and give rise to a soluble form. In terms of tissue distribution, widely distributed throughout the CNS. Particularly abundant in kidney and intestinal microvilli, also detected in lung and liver. Weakly expressed in heart and aorta.

It localises to the cell membrane. The enzyme catalyses Release of an N-terminal amino acid, Xaa-|-Yaa- from a peptide, amide or arylamide. Xaa is preferably Ala, but may be most amino acids including Pro (slow action). When a terminal hydrophobic residue is followed by a prolyl residue, the two may be released as an intact Xaa-Pro dipeptide.. Its function is as follows. Broad specificity aminopeptidase which plays a role in the final digestion of peptides generated from hydrolysis of proteins by gastric and pancreatic proteases. Also involved in the processing of various peptides including peptide hormones, such as angiotensin III and IV, neuropeptides, and chemokines. May also be involved the cleavage of peptides bound to major histocompatibility complex class II molecules of antigen presenting cells. May have a role in angiogenesis and promote cholesterol crystallization. May have a role in amino acid transport by acting as binding partner of amino acid transporter SLC6A19 and regulating its activity. The sequence is that of Aminopeptidase N (Anpep) from Rattus norvegicus (Rat).